A 355-amino-acid chain; its full sequence is NADH-quinone oxidoreductase subunit H (355 aa).

8 consecutive transmembrane segments (helical) span residues 25 to 45, 91 to 111, 126 to 146, 170 to 190, 205 to 225, 253 to 273, 290 to 310, and 330 to 350; these read IVRILVVAVVILLCVAYLILW, WLYLIAPVMTVVPAFAVWAVI, LLYAMAISSIGVYAVILAGWA, MGFALVLVLMTAGSLNLSEIV, FLSWNWLPLLPAFVVYFVSGI, MAFALFFLAEYINMIVISALA, FIPGVFWLVLKVFALLSVFIW, and VFLPVTVIWVVVVGFWMMSPL.

It belongs to the complex I subunit 1 family. As to quaternary structure, NDH-1 is composed of 14 different subunits. Subunits NuoA, H, J, K, L, M, N constitute the membrane sector of the complex.

The protein resides in the cell inner membrane. It catalyses the reaction a quinone + NADH + 5 H(+)(in) = a quinol + NAD(+) + 4 H(+)(out). NDH-1 shuttles electrons from NADH, via FMN and iron-sulfur (Fe-S) centers, to quinones in the respiratory chain. The immediate electron acceptor for the enzyme in this species is believed to be ubiquinone. Couples the redox reaction to proton translocation (for every two electrons transferred, four hydrogen ions are translocated across the cytoplasmic membrane), and thus conserves the redox energy in a proton gradient. This subunit may bind ubiquinone. The protein is NADH-quinone oxidoreductase subunit H of Burkholderia ambifaria (strain MC40-6).